The following is a 242-amino-acid chain: MHTDEKIYEGKAKVLYPTDDPQVFQVHFKDDATAFNAQKRGAIAGKGRINCTISAHLFQMLAKAGIANHFLSQPAPDQMLVRAVQIIPVEVVVRNIAAGSLCQQTGLPLGTPLKKPLVEFYYKNDDLGDPLLTRERLLLLELATAAEIEQLEALARQINEHLIVFFQQCGITLVDFKLEFGRDQNQHILLADEISPDTCRLWNQSETDPEQRVMDKDRFRRDLGNVESAYEQVMARVLAQPL.

The protein belongs to the SAICAR synthetase family.

It carries out the reaction 5-amino-1-(5-phospho-D-ribosyl)imidazole-4-carboxylate + L-aspartate + ATP = (2S)-2-[5-amino-1-(5-phospho-beta-D-ribosyl)imidazole-4-carboxamido]succinate + ADP + phosphate + 2 H(+). It functions in the pathway purine metabolism; IMP biosynthesis via de novo pathway; 5-amino-1-(5-phospho-D-ribosyl)imidazole-4-carboxamide from 5-amino-1-(5-phospho-D-ribosyl)imidazole-4-carboxylate: step 1/2. The protein is Phosphoribosylaminoimidazole-succinocarboxamide synthase of Cyanothece sp. (strain PCC 7425 / ATCC 29141).